The primary structure comprises 104 residues: Late embryogenis abundant protein 41 (104 aa).

Residues 1–31 (MAARSLSGAVKSLCSAASGSLSCSIVLRRSY) constitute a mitochondrion transit peptide.

It belongs to the LEA type 3 family.

The protein localises to the mitochondrion. This chain is Late embryogenis abundant protein 41, found in Arabidopsis thaliana (Mouse-ear cress).